We begin with the raw amino-acid sequence, 415 residues long: MSPFLYLVLLVLGLHATIHCASPEGKVTACHSSQPNATLYKMSSINADFAFNLYRRFTVETPDKNIFFSPVSISAALVMLSFGACCSTQTEIVETLGFNLTDTPMVEIQHGFQHLICSLNFPKKELELQIGNALFIGKHLKPLAKFLNDVKTLYETEVFSTDFSNISAAKQEINSHVEMQTKGKVVGLIQDLKPNTIMVLVNYIHFKAQWANPFDPSKTEDSSSFLIDKTTTVQVPMMHQMEQYYHLVDMELNCTVLQMDYSKNALALFVLPKEGQMESVEAAMSSKTLKKWNRLLQKGWVDLFVPKFSISATYDLGATLLKMGIQHAYSENADFSGLTEDNGLKLSNAAHKAVLHIGEKGTEAAAVPEVELSDQPENTFLHPIIQIDRSFMLLILERSTRSILFLGKVVNPTEA.

A signal peptide spans Met-1 to Cys-20. Asn-36 carries an N-linked (GlcNAc...) (complex) asparagine glycan. Asn-99 is a glycosylation site (N-linked (GlcNAc...) asparagine). N-linked (GlcNAc...) asparagine; in variant Gary glycosylation occurs at Ile-116. N-linked (GlcNAc...) asparagine glycans are attached at residues Asn-165 and Asn-253. Thyroxine contacts are provided by Asn-293 and Arg-398.

This sequence belongs to the serpin family. As to expression, expressed by the liver and secreted in plasma.

Its subcellular location is the secreted. Its function is as follows. Major thyroid hormone transport protein in serum. This Homo sapiens (Human) protein is Thyroxine-binding globulin (SERPINA7).